The following is a 1226-amino-acid chain: Methionine synthase (1226 aa).

Residues arginine 6–valine 326 form the Hcy-binding domain. 3 residues coordinate Zn(2+): cysteine 248, cysteine 311, and cysteine 312. Residues phenylalanine 357–glutamate 618 form the Pterin-binding domain. A B12-binding N-terminal domain is found at serine 651–serine 745. Methylcob(III)alamin contacts are provided by residues glutamate 695, glycine 757–aspartate 761, histidine 760, serine 805, threonine 809, and alanine 861. Residues asparagine 747 to glutamate 882 form the B12-binding domain. In terms of domain architecture, AdoMet activation spans lysine 898 to glycine 1226. S-adenosyl-L-methionine-binding positions include aspartate 948, arginine 1136, and tyrosine 1191–phenylalanine 1192.

This sequence belongs to the vitamin-B12 dependent methionine synthase family. The cofactor is methylcob(III)alamin. Zn(2+) is required as a cofactor.

The enzyme catalyses (6S)-5-methyl-5,6,7,8-tetrahydrofolate + L-homocysteine = (6S)-5,6,7,8-tetrahydrofolate + L-methionine. Its pathway is amino-acid biosynthesis; L-methionine biosynthesis via de novo pathway; L-methionine from L-homocysteine (MetH route): step 1/1. Catalyzes the transfer of a methyl group from methyl-cobalamin to homocysteine, yielding enzyme-bound cob(I)alamin and methionine. Subsequently, remethylates the cofactor using methyltetrahydrofolate. In Vibrio vulnificus (strain CMCP6), this protein is Methionine synthase (metH).